We begin with the raw amino-acid sequence, 88 residues long: Small ribosomal subunit protein bS20 (88 aa).

This sequence belongs to the bacterial ribosomal protein bS20 family.

Functionally, binds directly to 16S ribosomal RNA. This chain is Small ribosomal subunit protein bS20, found in Brucella abortus (strain S19).